Consider the following 489-residue polypeptide: L-asparagine permease 1 (489 aa).

Transmembrane regions (helical) follow at residues 25 to 45 (QLQM…GASG), 49 to 69 (KAGP…FLIL), 100 to 120 (AVGW…TTAI), 137 to 157 (ILAL…VEWF), 162 to 182 (FWAA…GTVF), 210 to 230 (WLPL…VELV), 255 to 275 (IAIF…YTAY), 289 to 309 (IGFH…ALSS), 344 to 364 (YGGI…NAFK), 369 to 389 (FEIV…TIVL), 413 to 433 (SPYS…TMAS), and 439 to 459 (TWTV…WYLV).

Belongs to the amino acid-polyamine-organocation (APC) superfamily. Amino acid transporter (AAT) (TC 2.A.3.1) family.

The protein localises to the cell membrane. The chain is L-asparagine permease 1 (ansP1) from Mycobacterium bovis (strain ATCC BAA-935 / AF2122/97).